A 352-amino-acid chain; its full sequence is Dihydroorotate dehydrogenase (quinone) (352 aa).

Residues 68–72 (AGFDK) and Thr92 each bind FMN. Lys72 is a substrate binding site. 117-121 (NAMGF) serves as a coordination point for substrate. FMN is bound by residues Asn146 and Asn179. Asn179 serves as a coordination point for substrate. Ser182 (nucleophile) is an active-site residue. Residue Asn184 participates in substrate binding. The FMN site is built by Lys215 and Thr243. A substrate-binding site is contributed by 244 to 245 (NT). FMN contacts are provided by residues Gly263, Gly292, and 313–314 (YS).

This sequence belongs to the dihydroorotate dehydrogenase family. Type 2 subfamily. In terms of assembly, monomer. FMN serves as cofactor.

It is found in the cell membrane. The enzyme catalyses (S)-dihydroorotate + a quinone = orotate + a quinol. It participates in pyrimidine metabolism; UMP biosynthesis via de novo pathway; orotate from (S)-dihydroorotate (quinone route): step 1/1. Catalyzes the conversion of dihydroorotate to orotate with quinone as electron acceptor. The polypeptide is Dihydroorotate dehydrogenase (quinone) (Sulfurimonas denitrificans (strain ATCC 33889 / DSM 1251) (Thiomicrospira denitrificans (strain ATCC 33889 / DSM 1251))).